Consider the following 137-residue polypeptide: Fluoride-specific ion channel FluC 4 (137 aa).

The next 4 membrane-spanning stretches (helical) occupy residues 20 to 40 (AAIG…ILGA), 43 to 63 (LWGT…FATL), 83 to 103 (GLCG…LLVL), and 110 to 130 (ALAY…LGLI). Na(+)-binding residues include glycine 86 and threonine 89.

This sequence belongs to the fluoride channel Fluc/FEX (TC 1.A.43) family.

It is found in the cell inner membrane. The enzyme catalyses fluoride(in) = fluoride(out). Its activity is regulated as follows. Na(+) is not transported, but it plays an essential structural role and its presence is essential for fluoride channel function. Functionally, fluoride-specific ion channel. Important for reducing fluoride concentration in the cell, thus reducing its toxicity. The polypeptide is Fluoride-specific ion channel FluC 4 (Brucella suis biovar 1 (strain 1330)).